Reading from the N-terminus, the 358-residue chain is MKNKIVFAPIGQGGGNIVDTLLGICGDYNALFINTSKKDLDSLKHAKHTYHIPYAEGCGKERKKAVGYAQTYYKQIIAQIMEKFSSCDIVIFVATMAGGTGSGITPPILGLAKQMYPNKHFGFVGVLPKATEDIDEHMNAIACWNDIMRSTNEGKDISIYLLDNNKREKESDINKEFATLFNDFMNMSESHAEGVVDEDEISKLLTMKKSNVILEFDDKEDIQVALAKSLKESIFAEYTTNTCEFMGISTTRVVDVEAIKSIVGYPRRTFKGYNSKKNIVVATGIEPQKTTVQMMNEIIEDKMKQRREVTSKSENMIIEPIALDDEDNKSVISSNEKEISIDNVEKEIDINDFFSKYM.

GDP contacts are provided by residues 12–16, T95, 99–101, E132, N164, E170, and N174; these read QGGGN and GTG. N182 contributes to the GTP binding site.

Belongs to the FtsZ family. TubZ subfamily. In terms of assembly, monomer. In the presence of Mg(2+) and GTP assembles into 2-stranded filaments which coalesce into bundles. Binds a centromere-like site (tubC)-TubR complex. The TubZ-TubR-tubC complex bind to TubY which reshapes the filament bundles into rings. A later paper by the same group shows 4-stranded filament formation and suggests the 2-stranded form is a short-lived intermediate.

It is found in the host cytoplasm. It catalyses the reaction GTP + H2O = GDP + phosphate + H(+). Functionally, a tubulin-like, filament forming GTPase; the motor component of the type III partition system presumably used to ensure correct segregation of this bacteriophage. In the presence of Mg(2+) and GTP (or GTP-gamma-S) assembles into filaments which upon polymerization are almost exclusively bound to GDP. Filament formation is cooperative, requiring a critical concentration. Formation occurs very quickly and is followed by disassembly as GTP is consumed. Unlike its plasmid homolog in B.thuringiensis (AC Q8KNP3) GTP-gamma-S does not alter filament formation. When forced to assemble with GDP instead of GTP it makes much stiffer, thicker filaments. The filaments bind a DNA centromere-like site (tubC)-TubR complex which extends to surround the TubZ filaments. Highly dynamic filaments grow at the plus end and depolymerize at the minus end, a process called treadmilling. TubR-tubC complexes track the depolymerizing minus end of the filament, probably pulling phage DNA within the cell. This chain is Tubulin-like protein TubZ, found in Clostridium botulinum C phage (Clostridium botulinum C bacteriophage).